A 348-amino-acid polypeptide reads, in one-letter code: Xaa-Pro dipeptidase (348 aa).

5 residues coordinate Co(2+): aspartate 209, aspartate 220, histidine 284, glutamate 313, and glutamate 327.

It belongs to the peptidase M24B family. Archaeal-type prolidase subfamily. In terms of assembly, homodimer. Co(2+) serves as cofactor. The cofactor is Mn(2+).

Its subcellular location is the cytoplasm. It carries out the reaction Xaa-L-Pro dipeptide + H2O = an L-alpha-amino acid + L-proline. Functionally, splits dipeptides with a prolyl in the C-terminal position and a nonpolar amino acid at the N-terminal position. The protein is Xaa-Pro dipeptidase (pepQ) of Pyrococcus furiosus (strain ATCC 43587 / DSM 3638 / JCM 8422 / Vc1).